The chain runs to 174 residues: Keratin-associated protein 9-2 (174 aa).

Repeat copies occupy residues 8 to 12 (CCQPT), 13 to 17 (CCRTT), 18 to 22 (CCRTT), 37 to 41 (CCQPA), 42 to 46 (CCVSS), 51 to 55 (CCRPT), 61 to 65 (CCRTT), 66 to 70 (CCQPT), 75 to 79 (CCQPS), 80 to 84 (CCSTP), 85 to 89 (CCQPT), 90 to 94 (CCGSS), 95 to 99 (CCGQT), 144 to 148 (CCRPA), 149 to 153 (CCETT), 154 to 158 (CCRTT), and 168 to 172 (CCQPS). The segment at 8-172 (CCQPTCCRTT…TCVSSCCQPS (165 aa)) is 17 X 5 AA repeats of C-C-[RQVSGE]-[SPTQ]-[TASP].

The protein belongs to the KRTAP type 9 family. In terms of assembly, interacts with hair keratins.

Its function is as follows. In the hair cortex, hair keratin intermediate filaments are embedded in an interfilamentous matrix, consisting of hair keratin-associated proteins (KRTAP), which are essential for the formation of a rigid and resistant hair shaft through their extensive disulfide bond cross-linking with abundant cysteine residues of hair keratins. The matrix proteins include the high-sulfur and high-glycine-tyrosine keratins. The polypeptide is Keratin-associated protein 9-2 (KRTAP9-2) (Homo sapiens (Human)).